A 266-amino-acid polypeptide reads, in one-letter code: GTP-binding protein Rhes (266 aa).

Residue 26 to 33 (GASRVGKS) coordinates GTP. The Effector region motif lies at 48–56 (YTPTIEDFH). Residues 73-77 (DTSGN) and 140-143 (NKND) contribute to the GTP site. The tract at residues 189–235 (MAKLPHEMSPALHRKISVQYGDAFHPRPFCMRRVKEMDAYGMVSPFA) is interaction with GNB1, GNB2 and GNB3. C263 bears the Cysteine methyl ester mark. Residue C263 is the site of S-farnesyl cysteine attachment. A propeptide spans 264-266 (TIQ) (removed in mature form).

This sequence belongs to the small GTPase superfamily. RasD family. Monomer (Potential). Interacts with PIK3CA and UBE2I. Interacts with GNB1, GNB2 and GNB3. Interacts with HTT; interacts with mutant HTT (mHTT) with a much higher affinity than wild type HTT. Farnesylated. Farnesylation is required for membrane targeting. In terms of tissue distribution, pancreatic endocrine cells (islets of Langerhans).

It localises to the cell membrane. Its function is as follows. GTPase signaling protein that binds to and hydrolyzes GTP. Regulates signaling pathways involving G-proteins-coupled receptor and heterotrimeric proteins such as GNB1, GNB2 and GNB3. May be involved in selected striatal competencies, mainly locomotor activity and motor coordination. This Homo sapiens (Human) protein is GTP-binding protein Rhes (RASD2).